A 28-amino-acid chain; its full sequence is 3,4-dihydroxybenzoate decarboxylase (28 aa).

In terms of assembly, homopentamer.

It carries out the reaction 3,4-dihydroxybenzoate + H(+) = catechol + CO2. Inhibited by oxygen. Completely inhibited by HgCl(2). Partially inhibited by ZnSO(4), 2,3,4-trihydroxybeonzoate and 3,4,5-trihydroxybeonzoate. Unaffected by KCl, MnCl(2) or EDTA. Not stimulated by thiamine phosphate, pyridoxal 5'-phosphate or biotin. Not inhibited by hydroxylamine, NaBH(4) or avidin. Reversibly catalyzes the decarboxylation of 3,4-dihydroxybenzoate to catechol. Inactive toward 4-hydroxybenzoate and other benzoate derivatives. The polypeptide is 3,4-dihydroxybenzoate decarboxylase (Sedimentibacter hydroxybenzoicus (Clostridium hydroxybenzoicum)).